The sequence spans 466 residues: F-box/WD repeat-containing protein 15 (466 aa).

The F-box domain occupies 1–45 (MAIHLPCLPMMKILSYLDAYSLLQAAQVNKDWNELASSDVLWRKL). 5 WD repeats span residues 101-143 (GYAC…ITWK), 146-185 (EQPASIKLLTTLPEMHIAVTVDIQSTIKLWDCHNREALAT), 187-228 (NLKS…LIST), 339-379 (LQCH…KTFQ), and 381-419 (CPEMIVKLSVDPLHVIVICNTGSMDVYAWEERSLLLRKC).

As to quaternary structure, part of an SCF (SKP1-CUL1-F-box protein) E3 ubiquitin-protein ligase complex. Interacts with KAT7 and SKP1. Specifically expressed in oocytes from follicles of the medullary region of the ovary.

It is found in the cytoplasm. The protein localises to the cytosol. Its subcellular location is the endoplasmic reticulum. The protein resides in the nucleus. It participates in protein modification; protein ubiquitination. Substrate-recognition component of an SCF (SKP1-CUL1-F-box protein)-type E3 ubiquitin ligase complex. Promotes KAT7 ubiquitination and subsequent degradation in collaboration with MAP2K1 kinase, leading to reduced histone H3K14 acetylation and increased cell proliferation. In Mus musculus (Mouse), this protein is F-box/WD repeat-containing protein 15.